A 75-amino-acid chain; its full sequence is U14-hexatoxin-Mg1a (75 aa).

Residues 1–19 form the signal peptide; sequence MKLTLFILIVFVVLANVYA. A propeptide spanning residues 20 to 31 is cleaved from the precursor; that stretch reads AGISERNIIGGR.

Post-translationally, contains 4 disulfide bonds. In terms of tissue distribution, expressed by the venom gland.

It localises to the secreted. In terms of biological role, no toxicity is observed upon intracranial injection into mice and intrathorax injection into crickets. The sequence is that of U14-hexatoxin-Mg1a from Macrothele gigas (Japanese funnel web spider).